A 149-amino-acid polypeptide reads, in one-letter code: Large ribosomal subunit protein bL9 (149 aa).

This sequence belongs to the bacterial ribosomal protein bL9 family.

Its function is as follows. Binds to the 23S rRNA. The chain is Large ribosomal subunit protein bL9 from Aquifex aeolicus (strain VF5).